A 321-amino-acid polypeptide reads, in one-letter code: Acetyl-coenzyme A carboxylase carboxyl transferase subunit alpha (321 aa).

The region spanning 37-298 (DLDDEIKRLQ…KQRILSDLED (262 aa)) is the CoA carboxyltransferase C-terminal domain.

This sequence belongs to the AccA family. As to quaternary structure, acetyl-CoA carboxylase is a heterohexamer composed of biotin carboxyl carrier protein (AccB), biotin carboxylase (AccC) and two subunits each of ACCase subunit alpha (AccA) and ACCase subunit beta (AccD).

The protein localises to the cytoplasm. The enzyme catalyses N(6)-carboxybiotinyl-L-lysyl-[protein] + acetyl-CoA = N(6)-biotinyl-L-lysyl-[protein] + malonyl-CoA. The protein operates within lipid metabolism; malonyl-CoA biosynthesis; malonyl-CoA from acetyl-CoA: step 1/1. Functionally, component of the acetyl coenzyme A carboxylase (ACC) complex. First, biotin carboxylase catalyzes the carboxylation of biotin on its carrier protein (BCCP) and then the CO(2) group is transferred by the carboxyltransferase to acetyl-CoA to form malonyl-CoA. The polypeptide is Acetyl-coenzyme A carboxylase carboxyl transferase subunit alpha (Mannheimia succiniciproducens (strain KCTC 0769BP / MBEL55E)).